We begin with the raw amino-acid sequence, 415 residues long: MCLSPVKGAKLILIFLFLGAVQSNALIVNLTDSKGTCLYAEWEMNFTITYETTNQTNKTITIAVPDKATHDGSSCGDDRNSAKIMIQFGFAVSWAVNFTKEASHYSIHDIVLSYNTSDSTVFPGAVAKGVHTVKNPENFKVPLDVIFKCNSVLTYNLTPVVQKYWGIHLQAFVQNGTVSKNEQVCEEDQTPTTVAPIIHTTAPSTTTTLTPTSTPTPTPTPTPTVGNYSIRNGNTTCLLATMGLQLNITEEKVPFIFNINPATTNFTGSCQPQSAQLRLNNSQIKYLDFIFAVKNEKRFYLKEVNVYMYLANGSAFNISNKNLSFWDAPLGSSYMCNKEQVLSVSRAFQINTFNLKVQPFNVTKGQYSTAQDCSADEDNFLVPIAVGAALGGVLILVLLAYFIGLKRHHTGYEQF.

A signal peptide spans Met-1–Ala-25. The first lumenal domain stretch occupies residues Leu-26–Asp-188. Topologically, residues Leu-26–Asn-379 are lumenal. 7 N-linked (GlcNAc...) asparagine glycosylation sites follow: Asn-29, Asn-45, Asn-54, Asn-57, Asn-97, Asn-115, and Asn-175. A disulfide bridge connects residues Cys-37 and Cys-75. The cysteines at positions 149 and 185 are disulfide-linked. A hinge region spans residues Gln-189–Gly-233. The segment covering Ala-202–Ser-213 has biased composition (low complexity). The interval Ala-202–Asn-227 is disordered. N-linked (GlcNAc...) asparagine glycans are attached at residues Asn-227, Asn-234, Asn-247, Asn-265, Asn-280, Asn-312, Asn-317, Asn-322, and Asn-361. The interval Asn-234–Asn-379 is second lumenal domain. Cys-237 and Cys-270 are oxidised to a cystine. Cys-336 and Cys-373 are oxidised to a cystine. A helical membrane pass occupies residues Phe-380–Gly-404. At Leu-405–Phe-415 the chain is on the cytoplasmic side. An important for binding and subsequent lysosomal degradation of target proteins region spans residues Lys-406 to His-409.

It belongs to the LAMP family. Monomer. Forms large homooligomers. Interacts (via its cytoplasmic region) with HSPA8; HSPA8 mediates recruitment of proteins with a KFERQ motif to the surface of the lysosome for chaperone-mediated autophagy. Interacts with HSP90 in the lysosome lumen; this enhances LAMP2 stability. Interacts with MLLT11. Interacts with ABCB9. Interacts with FURIN. Interacts with CT55; this interaction may be important for LAMP2 protein stability. Interacts with TMEM175; inhibiting the proton channel activity of TMEM175. Forms a ternary complex with RAB7A and RUFY4 (via RUN domain); the interaction with RAB7A is mediated by RUFY4 (via RUN and coiled coil domains). Post-translationally, extensively N-glycosylated. Contains a minor proportion of O-linked glycans. As to expression, detected in liver and kidney (at protein level). Detected in liver and kidney.

Its subcellular location is the lysosome membrane. The protein resides in the endosome membrane. The protein localises to the cytoplasmic vesicle. It is found in the autophagosome membrane. It localises to the cell membrane. Functionally, lysosomal membrane glycoprotein which plays an important role in lysosome biogenesis, lysosomal pH regulation and autophagy. Acts as an important regulator of lysosomal lumen pH regulation by acting as a direct inhibitor of the proton channel TMEM175, facilitating lysosomal acidification for optimal hydrolase activity. Plays an important role in chaperone-mediated autophagy, a process that mediates lysosomal degradation of proteins in response to various stresses and as part of the normal turnover of proteins with a long biological half-live. Functions by binding target proteins, such as GAPDH, NLRP3 and MLLT11, and targeting them for lysosomal degradation. In the chaperone-mediated autophagy, acts downstream of chaperones, such as HSPA8/HSC70, which recognize and bind substrate proteins and mediate their recruitment to lysosomes, where target proteins bind LAMP2. Plays a role in lysosomal protein degradation in response to starvation. Required for the fusion of autophagosomes with lysosomes during autophagy. Cells that lack LAMP2 express normal levels of VAMP8, but fail to accumulate STX17 on autophagosomes, which is the most likely explanation for the lack of fusion between autophagosomes and lysosomes. Required for normal degradation of the contents of autophagosomes. Required for efficient MHC class II-mediated presentation of exogenous antigens via its function in lysosomal protein degradation; antigenic peptides generated by proteases in the endosomal/lysosomal compartment are captured by nascent MHC II subunits. Is not required for efficient MHC class II-mediated presentation of endogenous antigens. The protein is Lysosome-associated membrane glycoprotein 2 (Lamp2) of Mus musculus (Mouse).